A 1106-amino-acid chain; its full sequence is Exportin-T (1106 aa).

Positions 336–357 (TPLESRTRTGPSAQNGQSDTSD) are disordered. Over residues 343-357 (RTGPSAQNGQSDTSD) the composition is skewed to polar residues.

The protein belongs to the exportin family.

It localises to the nucleus. The protein resides in the cytoplasm. In terms of biological role, tRNA nucleus export receptor which facilitates tRNA translocation across the nuclear pore complex. Involved in pre-tRNA splicing, probably by affecting the interaction of pre-tRNA with splicing endonuclease. The polypeptide is Exportin-T (LOS1) (Mycosarcoma maydis (Corn smut fungus)).